Reading from the N-terminus, the 117-residue chain is Fluoride-specific ion channel FluC 2 (117 aa).

4 consecutive transmembrane segments (helical) span residues 1–21, 33–53, 60–80, and 95–115; these read MISI…RSAI, LPIA…LTIG, WFPA…STLA, and LFLN…YIGY. Na(+) contacts are provided by G71 and T74.

Belongs to the fluoride channel Fluc/FEX (TC 1.A.43) family.

Its subcellular location is the cell membrane. It catalyses the reaction fluoride(in) = fluoride(out). With respect to regulation, na(+) is not transported, but it plays an essential structural role and its presence is essential for fluoride channel function. Fluoride-specific ion channel. Important for reducing fluoride concentration in the cell, thus reducing its toxicity. This is Fluoride-specific ion channel FluC 2 from Staphylococcus aureus (strain COL).